The primary structure comprises 454 residues: Bifunctional protein GlmU (454 aa).

The interval Met-1–Pro-228 is pyrophosphorylase. UDP-N-acetyl-alpha-D-glucosamine is bound by residues Leu-10–Gly-13, Lys-24, Gln-76, Gly-81–Thr-82, Tyr-103–Asp-105, Gly-138, Glu-153, Asn-168, and Asn-226. Residue Asp-105 coordinates Mg(2+). Asn-226 is a Mg(2+) binding site. Residues Trp-229–Gln-249 form a linker region. Residues Gly-250–Lys-454 form an N-acetyltransferase region. UDP-N-acetyl-alpha-D-glucosamine contacts are provided by Arg-332 and Lys-350. Residue His-362 is the Proton acceptor of the active site. Residues Tyr-365 and Asn-376 each coordinate UDP-N-acetyl-alpha-D-glucosamine. Acetyl-CoA is bound by residues Ala-379, Asn-385 to Tyr-386, Ser-404, Ala-422, and Arg-439.

In the N-terminal section; belongs to the N-acetylglucosamine-1-phosphate uridyltransferase family. It in the C-terminal section; belongs to the transferase hexapeptide repeat family. Homotrimer. Mg(2+) is required as a cofactor.

The protein localises to the cytoplasm. The enzyme catalyses alpha-D-glucosamine 1-phosphate + acetyl-CoA = N-acetyl-alpha-D-glucosamine 1-phosphate + CoA + H(+). The catalysed reaction is N-acetyl-alpha-D-glucosamine 1-phosphate + UTP + H(+) = UDP-N-acetyl-alpha-D-glucosamine + diphosphate. The protein operates within nucleotide-sugar biosynthesis; UDP-N-acetyl-alpha-D-glucosamine biosynthesis; N-acetyl-alpha-D-glucosamine 1-phosphate from alpha-D-glucosamine 6-phosphate (route II): step 2/2. Its pathway is nucleotide-sugar biosynthesis; UDP-N-acetyl-alpha-D-glucosamine biosynthesis; UDP-N-acetyl-alpha-D-glucosamine from N-acetyl-alpha-D-glucosamine 1-phosphate: step 1/1. It functions in the pathway bacterial outer membrane biogenesis; LPS lipid A biosynthesis. Its function is as follows. Catalyzes the last two sequential reactions in the de novo biosynthetic pathway for UDP-N-acetylglucosamine (UDP-GlcNAc). The C-terminal domain catalyzes the transfer of acetyl group from acetyl coenzyme A to glucosamine-1-phosphate (GlcN-1-P) to produce N-acetylglucosamine-1-phosphate (GlcNAc-1-P), which is converted into UDP-GlcNAc by the transfer of uridine 5-monophosphate (from uridine 5-triphosphate), a reaction catalyzed by the N-terminal domain. The protein is Bifunctional protein GlmU of Xanthomonas campestris pv. campestris (strain B100).